The chain runs to 213 residues: Holliday junction branch migration complex subunit RuvA (213 aa).

A domain I region spans residues 1–63; the sequence is MISFLRGTVA…EDSMTLFGFA (63 aa). The tract at residues 64 to 140 is domain II; sequence DDDEREVFEV…LVPHGTAPAA (77 aa). The segment at 140-144 is flexible linker; it reads AATTA. The interval 145-213 is domain III; that stretch reads AEASWKPQVV…RAGNRVGSRG (69 aa).

The protein belongs to the RuvA family. As to quaternary structure, homotetramer. Forms an RuvA(8)-RuvB(12)-Holliday junction (HJ) complex. HJ DNA is sandwiched between 2 RuvA tetramers; dsDNA enters through RuvA and exits via RuvB. An RuvB hexamer assembles on each DNA strand where it exits the tetramer. Each RuvB hexamer is contacted by two RuvA subunits (via domain III) on 2 adjacent RuvB subunits; this complex drives branch migration. In the full resolvosome a probable DNA-RuvA(4)-RuvB(12)-RuvC(2) complex forms which resolves the HJ.

Its subcellular location is the cytoplasm. In terms of biological role, the RuvA-RuvB-RuvC complex processes Holliday junction (HJ) DNA during genetic recombination and DNA repair, while the RuvA-RuvB complex plays an important role in the rescue of blocked DNA replication forks via replication fork reversal (RFR). RuvA specifically binds to HJ cruciform DNA, conferring on it an open structure. The RuvB hexamer acts as an ATP-dependent pump, pulling dsDNA into and through the RuvAB complex. HJ branch migration allows RuvC to scan DNA until it finds its consensus sequence, where it cleaves and resolves the cruciform DNA. In Pseudarthrobacter chlorophenolicus (strain ATCC 700700 / DSM 12829 / CIP 107037 / JCM 12360 / KCTC 9906 / NCIMB 13794 / A6) (Arthrobacter chlorophenolicus), this protein is Holliday junction branch migration complex subunit RuvA.